The following is a 461-amino-acid chain: Alpha-tubulin N-acetyltransferase 1 (461 aa).

The region spanning 2–189 (VEFRFDIKPL…NNFVLYEGFF (188 aa)) is the N-acetyltransferase domain. Residues 123 to 136 (FYVHESRQRAGLGK) and 159 to 168 (SEKLLSFLSK) each bind acetyl-CoA. 3 disordered regions span residues 196 to 295 (NGGG…GNHD), 314 to 362 (NSYE…PEVA), and 418 to 443 (RPPGHEVTSPGQDNTDAMSTVSSGGG). Over residues 233 to 254 (RRGSQQQTTPNARLQQITQISP) the composition is skewed to polar residues. The segment covering 283–293 (GSAEANSGNGN) has biased composition (low complexity). Over residues 318–336 (PEPEVEPEPEPEPEPEPEP) the composition is skewed to acidic residues. A compositionally biased stretch (pro residues) spans 339–356 (ITPPSPPPKSHTPTPPSV). Over residues 426 to 439 (SPGQDNTDAMSTVS) the composition is skewed to polar residues.

The protein belongs to the acetyltransferase ATAT1 family.

The enzyme catalyses L-lysyl-[alpha-tubulin] + acetyl-CoA = N(6)-acetyl-L-lysyl-[alpha-tubulin] + CoA + H(+). Functionally, specifically acetylates 'Lys-40' in alpha-tubulin on the lumenal side of microtubules. Promotes microtubule destabilization and accelerates microtubule dynamics; this activity may be independent of acetylation activity. Acetylates alpha-tubulin with a slow enzymatic rate, due to a catalytic site that is not optimized for acetyl transfer. Enters the microtubule through each end and diffuses quickly throughout the lumen of microtubules. Acetylates only long/old microtubules because of its slow acetylation rate since it does not have time to act on dynamically unstable microtubules before the enzyme is released. Acetylates central spindle microtubules. In Drosophila melanogaster (Fruit fly), this protein is Alpha-tubulin N-acetyltransferase 1.